Consider the following 193-residue polypeptide: Thymidine kinase (193 aa).

ATP-binding positions include 15 to 22 (GCMYSGKT) and 87 to 90 (DELH). The active-site Proton acceptor is the E88. Residues C147, C150, C185, and C188 each coordinate Zn(2+).

This sequence belongs to the thymidine kinase family. As to quaternary structure, homotetramer.

The protein resides in the cytoplasm. It carries out the reaction thymidine + ATP = dTMP + ADP + H(+). This Chloroflexus aurantiacus (strain ATCC 29366 / DSM 635 / J-10-fl) protein is Thymidine kinase.